The chain runs to 292 residues: ATP synthase gamma chain (292 aa).

Belongs to the ATPase gamma chain family. As to quaternary structure, F-type ATPases have 2 components, CF(1) - the catalytic core - and CF(0) - the membrane proton channel. CF(1) has five subunits: alpha(3), beta(3), gamma(1), delta(1), epsilon(1). CF(0) has three main subunits: a, b and c.

It localises to the cell inner membrane. In terms of biological role, produces ATP from ADP in the presence of a proton gradient across the membrane. The gamma chain is believed to be important in regulating ATPase activity and the flow of protons through the CF(0) complex. The sequence is that of ATP synthase gamma chain from Nautilia profundicola (strain ATCC BAA-1463 / DSM 18972 / AmH).